The sequence spans 386 residues: N-terminal EF-hand calcium-binding protein 2 (386 aa).

Omega-N-methylarginine is present on Arg-10. Arg-42 carries the post-translational modification Asymmetric dimethylarginine. EF-hand domains lie at 60 to 95 and 96 to 129; these read GGTAVILDIFRRADKNDDGKLSLEEFQLFFADGVLN and EKELEDLFHTIDSDNTNHVDTKELCDYFVDHMGD. Ca(2+) contacts are provided by Asp-73, Asn-75, Asp-77, Lys-79, Glu-84, Asp-107, Asp-109, Thr-111, His-113, and Glu-118. A coiled-coil region spans residues 170-201; the sequence is LKETANQIQSLLSSVESAVEAIEEQTSQLRQN. An ABM domain is found at 286–375; it reads QLVRQEMAVC…SQPEALSRIL (90 aa).

In terms of assembly, interacts (calcium-dependent) with ADORA2A and GRM5. As to expression, expressed in brain. Expressed in the spinal dorsal horn with especially strong expression in lamina IIi; found in excitory synaptic boutons and in ependymal cells (at protein level).

It is found in the cytoplasm. It localises to the cell projection. The protein localises to the dendrite. Its subcellular location is the axon. The protein resides in the cell membrane. May act as a signaling scaffold protein that senses intracellular calcium. Can modulate ligand-induced internalization of ADORA2A and coupling efficiency of mGluR5/GRM5; for both receptors may regulate signaling activity such as promoting MAPK1/3 (ERK1/2) activation. The chain is N-terminal EF-hand calcium-binding protein 2 (NECAB2) from Homo sapiens (Human).